A 201-amino-acid polypeptide reads, in one-letter code: Aminoglycoside N(6')-acetyltransferase type 1 (201 aa).

Residues 25–192 form the N-acetyltransferase domain; sequence VTLRLMTEHD…PAVYMVQTRQ (168 aa). 2 residues coordinate substrate: W51 and D154. N159 lines the acetyl-CoA pocket.

As to quaternary structure, homodimer.

The enzyme catalyses kanamycin B + acetyl-CoA = N(6')-acetylkanamycin B + CoA + H(+). Functionally, catalyzes the transfer of an acetyl group from acetyl-CoA to the 6'-amino group of aminoglycoside molecules conferring resistance to antibiotics containing the purpurosamine ring including amikacin and kanamycin. The chain is Aminoglycoside N(6')-acetyltransferase type 1 (aacA4) from Serratia marcescens.